A 286-amino-acid chain; its full sequence is Lipoyl synthase (286 aa).

Residues cysteine 38, cysteine 43, cysteine 49, cysteine 64, cysteine 68, cysteine 71, and serine 276 each contribute to the [4Fe-4S] cluster site. The region spanning 50–265 (WEQGVATFMI…ENIALDMGFL (216 aa)) is the Radical SAM core domain.

The protein belongs to the radical SAM superfamily. Lipoyl synthase family. The cofactor is [4Fe-4S] cluster.

The protein resides in the cytoplasm. The catalysed reaction is [[Fe-S] cluster scaffold protein carrying a second [4Fe-4S](2+) cluster] + N(6)-octanoyl-L-lysyl-[protein] + 2 oxidized [2Fe-2S]-[ferredoxin] + 2 S-adenosyl-L-methionine + 4 H(+) = [[Fe-S] cluster scaffold protein] + N(6)-[(R)-dihydrolipoyl]-L-lysyl-[protein] + 4 Fe(3+) + 2 hydrogen sulfide + 2 5'-deoxyadenosine + 2 L-methionine + 2 reduced [2Fe-2S]-[ferredoxin]. The protein operates within protein modification; protein lipoylation via endogenous pathway; protein N(6)-(lipoyl)lysine from octanoyl-[acyl-carrier-protein]: step 2/2. Its function is as follows. Catalyzes the radical-mediated insertion of two sulfur atoms into the C-6 and C-8 positions of the octanoyl moiety bound to the lipoyl domains of lipoate-dependent enzymes, thereby converting the octanoylated domains into lipoylated derivatives. This is Lipoyl synthase from Karelsulcia muelleri (strain GWSS) (Sulcia muelleri).